The following is a 157-amino-acid chain: uncharacterized protein (157 aa).

This is an uncharacterized protein from Lepidoptera (butterflies and moths).